The primary structure comprises 356 residues: Zinc finger CW-type PWWP domain protein 2 (356 aa).

The CW-type zinc finger occupies 24–79; it reads MYVNKVWVQCENENCLKWRLLSSEDSAKVDHDEPWYCFMNTDSRYNNCSISEEDFP. The Zn(2+) site is built by cysteine 33, cysteine 38, cysteine 60, and cysteine 71. The PWWP domain maps to 98–162; it reads LGSLVLVKLQ…ATFVGHYSIT (65 aa). The interval 279–307 is disordered; the sequence is QALQPTATPDESEEGHGEEINMGEKLSKC.

Its function is as follows. Histone methylation reader which binds to non-methylated (H3K4me0), monomethylated (H3K4me1), dimethylated (H3K4me2) and trimethylated (H3K4me3) 'Lys-4' on histone H3. The order of binding preference is H3K4me3 &gt; H3K4me2 &gt; H3K4me1 &gt; H3K4me0. The polypeptide is Zinc finger CW-type PWWP domain protein 2 (ZCWPW2) (Homo sapiens (Human)).